The sequence spans 162 residues: Caveolin-2 (162 aa).

The Cytoplasmic portion of the chain corresponds to 1–86 (MGLETEKADV…FEVSKYVIYK (86 aa)). Position 19 is a phosphotyrosine; by SRC (Tyr-19). A phosphoserine mark is found at Ser-20, Ser-23, and Ser-36. An intramembrane region (helical) is located at residues 87–107 (FLTLLLAMPMAFAAGVLFATL). Residues 108–162 (SCLHIWIIMPFVKTCLMVLPSVQTIWKSVTDAVIAPLCSSVGRSFSSVSLQVSHD) lie on the Cytoplasmic side of the membrane.

This sequence belongs to the caveolin family. As to quaternary structure, monomer or homodimer. Interacts with CAV1; the interaction forms a stable heterooligomeric complex that is required for targeting to lipid rafts and for caveolae formation. Tyrosine phosphorylated forms do not form heterooligomers with the Tyr-19-phosphorylated form existing as a monomer or dimer. Interacts (tyrosine phosphorylated form) with the SH2 domain-containing proteins, RASA1, NCK1 and SRC. Interacts (tyrosine phosphorylated form) with INSR. Interacts (Tyr-19 phosphorylated form) with MAPK1 (phosphorylated form); the interaction, promoted by insulin, leads to nuclear location and MAPK1 activation. Interacts with STAT3; the interaction is increased on insulin-induced tyrosine phosphorylation leading to STAT activation. Post-translationally, phosphorylated on serine and tyrosine residues. CAV1 promotes phosphorylation on Ser-23 which then targets the complex to the plasma membrane, lipid rafts and caveolae. Phosphorylation on Ser-36 appears to modulate mitosis in endothelial cells. Phosphorylation on Tyr-19 is required for insulin-induced phosphorylation of MAPK1 and DNA binding of STAT3. Tyrosine phosphorylation is induced by both EGF and insulin.

It localises to the nucleus. It is found in the cytoplasm. The protein localises to the golgi apparatus membrane. The protein resides in the cell membrane. Its subcellular location is the membrane. It localises to the caveola. Its function is as follows. May act as a scaffolding protein within caveolar membranes. Interacts directly with G-protein alpha subunits and can functionally regulate their activity. Acts as an accessory protein in conjunction with CAV1 in targeting to lipid rafts and driving caveolae formation. The Ser-36 phosphorylated form has a role in modulating mitosis in endothelial cells. Positive regulator of cellular mitogenesis of the MAPK signaling pathway. Required for the insulin-stimulated nuclear translocation and activation of MAPK1 and STAT3, and the subsequent regulation of cell cycle progression. This is Caveolin-2 (CAV2) from Canis lupus familiaris (Dog).